Here is a 69-residue protein sequence, read N- to C-terminus: MKKKIHPDYFKINVTCSCGNNINIFSTLSKNINVDVCSKCHPFYTGQQRTSDTGGRIEKFHKRFNISSH.

C16, C18, C37, and C40 together coordinate Zn(2+).

The protein belongs to the bacterial ribosomal protein bL31 family. Type A subfamily. As to quaternary structure, part of the 50S ribosomal subunit. Zn(2+) is required as a cofactor.

Its function is as follows. Binds the 23S rRNA. The polypeptide is Large ribosomal subunit protein bL31 (Buchnera aphidicola subsp. Baizongia pistaciae (strain Bp)).